The following is an 806-amino-acid chain: Phenylalanine--tRNA ligase beta subunit (806 aa).

The tRNA-binding domain maps to 40–155 (NKGVKGVVVG…SDAEVGADAL (116 aa)). The B5 domain maps to 409 to 484 (VQERTVSVTA…RLYGYDHIPV (76 aa)). The Mg(2+) site is built by Asp-462, Asp-468, Glu-471, and Glu-472. One can recognise an FDX-ACB domain in the interval 712-805 (PRFPSMTRDM…VEEKFGAELR (94 aa)).

This sequence belongs to the phenylalanyl-tRNA synthetase beta subunit family. Type 1 subfamily. As to quaternary structure, tetramer of two alpha and two beta subunits. It depends on Mg(2+) as a cofactor.

Its subcellular location is the cytoplasm. The catalysed reaction is tRNA(Phe) + L-phenylalanine + ATP = L-phenylalanyl-tRNA(Phe) + AMP + diphosphate + H(+). This chain is Phenylalanine--tRNA ligase beta subunit, found in Bacillus thuringiensis subsp. konkukian (strain 97-27).